The primary structure comprises 210 residues: Molybdenum cofactor guanylyltransferase (210 aa).

GTP-binding positions include 14 to 16 (LAG), Lys27, Asn55, Asp73, and Asp108. Asp108 contributes to the Mg(2+) binding site.

Belongs to the MobA family. As to quaternary structure, monomer. It depends on Mg(2+) as a cofactor.

The protein localises to the cytoplasm. The catalysed reaction is Mo-molybdopterin + GTP + H(+) = Mo-molybdopterin guanine dinucleotide + diphosphate. In terms of biological role, transfers a GMP moiety from GTP to Mo-molybdopterin (Mo-MPT) cofactor (Moco or molybdenum cofactor) to form Mo-molybdopterin guanine dinucleotide (Mo-MGD) cofactor. This chain is Molybdenum cofactor guanylyltransferase, found in Rhodopseudomonas palustris (strain BisB5).